The chain runs to 121 residues: Phosphoribosyl-ATP pyrophosphatase (121 aa).

Belongs to the PRA-PH family.

The protein resides in the cytoplasm. The enzyme catalyses 1-(5-phospho-beta-D-ribosyl)-ATP + H2O = 1-(5-phospho-beta-D-ribosyl)-5'-AMP + diphosphate + H(+). It functions in the pathway amino-acid biosynthesis; L-histidine biosynthesis; L-histidine from 5-phospho-alpha-D-ribose 1-diphosphate: step 2/9. This is Phosphoribosyl-ATP pyrophosphatase from Burkholderia ambifaria (strain MC40-6).